Reading from the N-terminus, the 1002-residue chain is BTB/POZ domain-containing protein At1g04390 (1002 aa).

2 BTB domains span residues 680–758 and 808–889; these read SDMR…EVES and SDVI…PKPP.

The protein operates within protein modification; protein ubiquitination. May act as a substrate-specific adapter of an E3 ubiquitin-protein ligase complex (CUL3-RBX1-BTB) which mediates the ubiquitination and subsequent proteasomal degradation of target proteins. This Arabidopsis thaliana (Mouse-ear cress) protein is BTB/POZ domain-containing protein At1g04390.